The chain runs to 253 residues: MTEFVVLIPARLDSSRLPGKALADIHGKPMVVRVAEQAAKSKAARVVVATDHPDIQTVCQAHGIEAVMTSNRHESGTTRLAEASAALKLPPHLIVVNVQGDEPLIAPELIDRTAEVLVENNVQMATAAHELHDFDELMNPNAVKVVLDKNRNAIYFSRAPIPYLRDAMRAGKREMPSETAVLRHIGIYAYRAGFLQRYAEMSVSPLETIESLEQLRVLWHGYPIAVETAKEAPAAGVDTQEDLDRVRAVFQTV.

It belongs to the KdsB family.

It is found in the cytoplasm. It carries out the reaction 3-deoxy-alpha-D-manno-oct-2-ulosonate + CTP = CMP-3-deoxy-beta-D-manno-octulosonate + diphosphate. It participates in nucleotide-sugar biosynthesis; CMP-3-deoxy-D-manno-octulosonate biosynthesis; CMP-3-deoxy-D-manno-octulosonate from 3-deoxy-D-manno-octulosonate and CTP: step 1/1. Its pathway is bacterial outer membrane biogenesis; lipopolysaccharide biosynthesis. Activates KDO (a required 8-carbon sugar) for incorporation into bacterial lipopolysaccharide in Gram-negative bacteria. This is 3-deoxy-manno-octulosonate cytidylyltransferase from Neisseria meningitidis serogroup C (strain 053442).